The chain runs to 473 residues: 3-isopropylmalate dehydratase large subunit 2 (473 aa).

Positions 350, 410, and 413 each coordinate [4Fe-4S] cluster.

This sequence belongs to the aconitase/IPM isomerase family. LeuC type 1 subfamily. In terms of assembly, heterodimer of LeuC and LeuD. [4Fe-4S] cluster is required as a cofactor.

The enzyme catalyses (2R,3S)-3-isopropylmalate = (2S)-2-isopropylmalate. The protein operates within amino-acid biosynthesis; L-leucine biosynthesis; L-leucine from 3-methyl-2-oxobutanoate: step 2/4. Catalyzes the isomerization between 2-isopropylmalate and 3-isopropylmalate, via the formation of 2-isopropylmaleate. In Salmonella choleraesuis (strain SC-B67), this protein is 3-isopropylmalate dehydratase large subunit 2.